A 349-amino-acid polypeptide reads, in one-letter code: Fe(3+) ions import ATP-binding protein FbpC (349 aa).

The ABC transporter domain occupies 7–237 (LVLKNVTKAF…PNSLFLANFM (231 aa)). An ATP-binding site is contributed by 39 to 46 (GPSGCGKT).

The protein belongs to the ABC transporter superfamily. Fe(3+) ion importer (TC 3.A.1.10) family. In terms of assembly, the complex is composed of two ATP-binding proteins (FbpC), two transmembrane proteins (FbpB) and a solute-binding protein (FbpA).

It is found in the cell inner membrane. The enzyme catalyses Fe(3+)(out) + ATP + H2O = Fe(3+)(in) + ADP + phosphate + H(+). Part of the ABC transporter complex FbpABC involved in Fe(3+) ions import. Responsible for energy coupling to the transport system. The polypeptide is Fe(3+) ions import ATP-binding protein FbpC (Pasteurella multocida (strain Pm70)).